The following is a 135-amino-acid chain: ATP synthase epsilon chain, chloroplastic (135 aa).

The protein belongs to the ATPase epsilon chain family. As to quaternary structure, F-type ATPases have 2 components, CF(1) - the catalytic core - and CF(0) - the membrane proton channel. CF(1) has five subunits: alpha(3), beta(3), gamma(1), delta(1), epsilon(1). CF(0) has three main subunits: a, b and c.

Its subcellular location is the plastid. The protein resides in the chloroplast thylakoid membrane. Its function is as follows. Produces ATP from ADP in the presence of a proton gradient across the membrane. The chain is ATP synthase epsilon chain, chloroplastic from Stigeoclonium helveticum (Green alga).